Reading from the N-terminus, the 288-residue chain is MAAHILSGRPVVESLHARIQQVLARRAPHQGPPTLTVLLPNDPSAQAYARAIRKQFTTLSLNYRTEEIDDTLDESRFAILLKRLAEDESVTGILALQPLPKGVSRRSLARLMPPTKDVDGVSFEQQGRLAIGSPWIAPSTPLGGLILLQHYGIEVAGRHAVVIGRSPVVGRPLALLLLARDATVTICHRRTPDLAKLTRQADLLFVAAGQPHLVKPDMVAPGAVVIDFGVSVRDGRLIGDVDPAVAEVASALTPVPGGTGPVTTAVLALNLLRLAGLLEENDLFPGAP.

NADP(+)-binding positions include 164–166 (GRS) and Val230.

It belongs to the tetrahydrofolate dehydrogenase/cyclohydrolase family. In terms of assembly, homodimer.

The catalysed reaction is (6R)-5,10-methylene-5,6,7,8-tetrahydrofolate + NADP(+) = (6R)-5,10-methenyltetrahydrofolate + NADPH. It catalyses the reaction (6R)-5,10-methenyltetrahydrofolate + H2O = (6R)-10-formyltetrahydrofolate + H(+). It functions in the pathway one-carbon metabolism; tetrahydrofolate interconversion. In terms of biological role, catalyzes the oxidation of 5,10-methylenetetrahydrofolate to 5,10-methenyltetrahydrofolate and then the hydrolysis of 5,10-methenyltetrahydrofolate to 10-formyltetrahydrofolate. This is Bifunctional protein FolD from Thermomicrobium roseum (strain ATCC 27502 / DSM 5159 / P-2).